The following is a 372-amino-acid chain: 4-hydroxy-3-methylbut-2-en-1-yl diphosphate synthase (flavodoxin) (372 aa).

[4Fe-4S] cluster-binding residues include Cys-270, Cys-273, Cys-305, and Glu-312.

The protein belongs to the IspG family. It depends on [4Fe-4S] cluster as a cofactor.

The enzyme catalyses (2E)-4-hydroxy-3-methylbut-2-enyl diphosphate + oxidized [flavodoxin] + H2O + 2 H(+) = 2-C-methyl-D-erythritol 2,4-cyclic diphosphate + reduced [flavodoxin]. It functions in the pathway isoprenoid biosynthesis; isopentenyl diphosphate biosynthesis via DXP pathway; isopentenyl diphosphate from 1-deoxy-D-xylulose 5-phosphate: step 5/6. Its function is as follows. Converts 2C-methyl-D-erythritol 2,4-cyclodiphosphate (ME-2,4cPP) into 1-hydroxy-2-methyl-2-(E)-butenyl 4-diphosphate. This chain is 4-hydroxy-3-methylbut-2-en-1-yl diphosphate synthase (flavodoxin), found in Escherichia coli (strain SMS-3-5 / SECEC).